The chain runs to 300 residues: Endonuclease III-like protein 1 (300 aa).

The N-terminal 19 residues, 1-19 (MNSGVRMVTRSRSRATRIA), are a transit peptide targeting the mitochondrion. Positions 1 to 53 (MNSGVRMVTRSRSRATRIASEGCREELAPREAAAEGRKSHRPVRHPRRTQKTH) are disordered. Residues 22 to 37 (GCREELAPREAAAEGR) show a composition bias toward basic and acidic residues. Positions 38-51 (KSHRPVRHPRRTQK) are enriched in basic residues. Residues 187–211 (RYEGDIPASVAELVALPGVGPKMAH) enclose the HhH domain. Lysine 208 functions as the Nucleophile; for N-glycosylase activity in the catalytic mechanism. Positions 278, 285, 288, and 294 each coordinate [4Fe-4S] cluster.

Belongs to the Nth/MutY family. In terms of assembly, interacts with YBX1. Interacts with ERCC5/XPG; the interaction stimulates NTHL1 activity and NTHL1 binding to its DNA substrate. [4Fe-4S] cluster is required as a cofactor. Ubiquitinated by TRIM26; leading to proteasomal degradation. In terms of tissue distribution, widely expressed.

The protein resides in the nucleus. The protein localises to the mitochondrion. It carries out the reaction 2'-deoxyribonucleotide-(2'-deoxyribose 5'-phosphate)-2'-deoxyribonucleotide-DNA = a 3'-end 2'-deoxyribonucleotide-(2,3-dehydro-2,3-deoxyribose 5'-phosphate)-DNA + a 5'-end 5'-phospho-2'-deoxyribonucleoside-DNA + H(+). Bifunctional DNA N-glycosylase with associated apurinic/apyrimidinic (AP) lyase function that catalyzes the first step in base excision repair (BER), the primary repair pathway for the repair of oxidative DNA damage. The DNA N-glycosylase activity releases the damaged DNA base from DNA by cleaving the N-glycosidic bond, leaving an AP site. The AP lyase activity cleaves the phosphodiester bond 3' to the AP site by a beta-elimination. Primarily recognizes and repairs oxidative base damage of pyrimidines. This is Endonuclease III-like protein 1 (Nthl1) from Mus musculus (Mouse).